The primary structure comprises 88 residues: Sec-independent protein translocase protein TatA (88 aa).

The helical transmembrane segment at 1-21 (MNLGPTEILLILVIVVLLFGA) threads the bilayer. Residues 46–56 (SNDDQRYEEQQ) show a composition bias toward basic and acidic residues. The tract at residues 46 to 88 (SNDDQRYEEQQQQRQIAAQAQQQVVNPVEIPQPQPTDIQRPQQ) is disordered. Over residues 57–68 (QQRQIAAQAQQQ) the composition is skewed to low complexity.

It belongs to the TatA/E family. As to quaternary structure, the Tat system comprises two distinct complexes: a TatABC complex, containing multiple copies of TatA, TatB and TatC subunits, and a separate TatA complex, containing only TatA subunits. Substrates initially bind to the TatABC complex, which probably triggers association of the separate TatA complex to form the active translocon.

The protein resides in the cell membrane. Functionally, part of the twin-arginine translocation (Tat) system that transports large folded proteins containing a characteristic twin-arginine motif in their signal peptide across membranes. TatA could form the protein-conducting channel of the Tat system. The sequence is that of Sec-independent protein translocase protein TatA from Corynebacterium diphtheriae (strain ATCC 700971 / NCTC 13129 / Biotype gravis).